The chain runs to 88 residues: Kunitz-type U15-theraphotoxin-Hhn1r (88 aa).

The signal sequence occupies residues 1–27 (MGIARILSAVLFLSVLFVVTFPTLLSA). The propeptide occupies 28 to 33 (DHHDGR). Residues 37 to 85 (CRLPSDRGRCKASFERWYFNGTTCTKFVYGGYGGNDNRFPTEKACMKRC) form the BPTI/Kunitz inhibitor domain. 2 disulfides stabilise this stretch: Cys37/Cys85 and Cys60/Cys81.

Belongs to the venom Kunitz-type family. 01 (intermediate) subfamily. In terms of tissue distribution, expressed by the venom gland.

The protein resides in the secreted. In terms of biological role, serine protease inhibitor that inhibits trypsin at a molar ratio of 1:1. The chain is Kunitz-type U15-theraphotoxin-Hhn1r from Cyriopagopus hainanus (Chinese bird spider).